Consider the following 263-residue polypeptide: Proteasome subunit beta type-5 (263 aa).

The propeptide at 1 to 59 is removed in mature form; that stretch reads MALASVLERPLPVNQRGFFGLGGRADLLDLGPGSLSDGLSLAAPGWGVPEEPGIEMLHG. The Nucleophile role is filled by T60. Bortezomib is bound at residue A108.

This sequence belongs to the peptidase T1B family. The 26S proteasome consists of a 20S proteasome core and two 19S regulatory subunits. The 20S proteasome core is a barrel-shaped complex made of 28 subunits that are arranged in four stacked rings. The two outer rings are each formed by seven alpha subunits, and the two inner rings are formed by seven beta subunits. The proteolytic activity is exerted by three beta-subunits PSMB5, PSMB6 and PSMB7. Directly interacts with POMP. Interacts with ABCB1 and TAP1. In terms of assembly, (Microbial infection) Interacts with HIV-1 TAT protein.

It localises to the cytoplasm. The protein resides in the nucleus. The catalysed reaction is Cleavage of peptide bonds with very broad specificity.. Its function is as follows. Component of the 20S core proteasome complex involved in the proteolytic degradation of most intracellular proteins. This complex plays numerous essential roles within the cell by associating with different regulatory particles. Associated with two 19S regulatory particles, forms the 26S proteasome and thus participates in the ATP-dependent degradation of ubiquitinated proteins. The 26S proteasome plays a key role in the maintenance of protein homeostasis by removing misfolded or damaged proteins that could impair cellular functions, and by removing proteins whose functions are no longer required. Associated with the PA200 or PA28, the 20S proteasome mediates ubiquitin-independent protein degradation. This type of proteolysis is required in several pathways including spermatogenesis (20S-PA200 complex) or generation of a subset of MHC class I-presented antigenic peptides (20S-PA28 complex). Within the 20S core complex, PSMB5 displays a chymotrypsin-like activity. This Homo sapiens (Human) protein is Proteasome subunit beta type-5.